A 244-amino-acid polypeptide reads, in one-letter code: Adenosylcobinamide-GDP ribazoletransferase (244 aa).

The next 5 helical transmembrane spans lie at 31 to 51 (LLFY…ASHL), 55 to 75 (APAP…SGAL), 109 to 129 (IAVV…WVLV), 134 to 154 (GGWL…LFMG), and 188 to 208 (VVLG…VFLW).

The protein belongs to the CobS family. It depends on Mg(2+) as a cofactor.

The protein localises to the cell inner membrane. The catalysed reaction is alpha-ribazole + adenosylcob(III)inamide-GDP = adenosylcob(III)alamin + GMP + H(+). It carries out the reaction alpha-ribazole 5'-phosphate + adenosylcob(III)inamide-GDP = adenosylcob(III)alamin 5'-phosphate + GMP + H(+). Its pathway is cofactor biosynthesis; adenosylcobalamin biosynthesis; adenosylcobalamin from cob(II)yrinate a,c-diamide: step 7/7. Its function is as follows. Joins adenosylcobinamide-GDP and alpha-ribazole to generate adenosylcobalamin (Ado-cobalamin). Also synthesizes adenosylcobalamin 5'-phosphate from adenosylcobinamide-GDP and alpha-ribazole 5'-phosphate. The polypeptide is Adenosylcobinamide-GDP ribazoletransferase (Pseudomonas entomophila (strain L48)).